The sequence spans 152 residues: Methylglyoxal synthase (152 aa).

The MGS-like domain occupies Thr-5–Lys-152. Substrate-binding positions include His-19, Lys-23, Thr-45–Thr-48, and Ser-65–Gly-66. Asp-71 (proton donor/acceptor) is an active-site residue. His-98 lines the substrate pocket.

This sequence belongs to the methylglyoxal synthase family.

It carries out the reaction dihydroxyacetone phosphate = methylglyoxal + phosphate. Its function is as follows. Catalyzes the formation of methylglyoxal from dihydroxyacetone phosphate. The polypeptide is Methylglyoxal synthase (Erwinia tasmaniensis (strain DSM 17950 / CFBP 7177 / CIP 109463 / NCPPB 4357 / Et1/99)).